The primary structure comprises 309 residues: Low density lipoprotein receptor adapter protein 1-B (309 aa).

The 155-residue stretch at 41–195 (LLEGMLFHLK…SDGEGASSSQ (155 aa)) folds into the PID domain. Positions 179 to 201 (DKREKSGSDGEGASSSQSDGSSS) are disordered. A compositionally biased stretch (low complexity) spans 189–201 (EGASSSQSDGSSS). Residues 213 to 217 (LLDFE) carry the Clathrin box motif. Positions 250-277 (WELDDGLDEAFARLAESRTNPQVLDIGL) are AP-2 complex binding. The short motif at 258–267 (EAFARLAESR) is the [DE]-X(1,2)-F-X-X-[FL]-X-X-X-R motif element.

Interacts (via PID domain) with ldlr (via NPXY motif). Binds to soluble clathrin trimers and to the adapter protein complex 2 (AP-2, beta 2 subunit). Binds to phosphoinositides, which regulate clathrin bud assembly at the cell surface. Interacts with the VLDL receptor (vldlr). Interacts with the vitellogenin receptor. As to expression, expressed at high level during oogenesis and embryogenesis. Found at low level in the adult liver and spleen. Found at very low level in testis and heart. Not found in the oocyte vegetal cortex.

It localises to the cytoplasm. Its function is as follows. Adapter protein (clathrin-associated sorting protein (CLASP)) required for efficient endocytosis of the LDL receptor (LDLR). Also involved in the vitellogenin receptor mediated endocytosis of nutrients during oogenesis. In Xenopus laevis (African clawed frog), this protein is Low density lipoprotein receptor adapter protein 1-B.